A 405-amino-acid chain; its full sequence is Eukaryotic initiation factor 4A (405 aa).

Residues 32 to 60 carry the Q motif motif; the sequence is PTFESMGLREELLRGIFNYGFEKPSAIQQ. The region spanning 63–233 is the Helicase ATP-binding domain; the sequence is ILPIIKGRDT…EKFMTKPVRI (171 aa). Position 76-83 (76-83) interacts with ATP; it reads AQSGTGKT. A DEAD box motif is present at residues 181-184; it reads DEAD. The Helicase C-terminal domain occupies 244–405; that stretch reads GIKQFFVSVE…EMPVNFASII (162 aa).

Belongs to the DEAD box helicase family. eIF4A subfamily.

It is found in the cytoplasm. It carries out the reaction ATP + H2O = ADP + phosphate + H(+). Functionally, ATP-dependent RNA helicase which is a subunit of the eIF4F complex involved in cap recognition and is required for mRNA binding to ribosome. In the current model of translation initiation, eIF4A unwinds RNA secondary structures in the 5'-UTR of mRNAs which is necessary to allow efficient binding of the small ribosomal subunit, and subsequent scanning for the initiator codon. In Dictyostelium discoideum (Social amoeba), this protein is Eukaryotic initiation factor 4A (tifA).